We begin with the raw amino-acid sequence, 270 residues long: Ethanolamine ammonia-lyase small subunit (270 aa).

Adenosylcob(III)alamin-binding residues include Val161, Glu182, and Cys211.

Belongs to the EutC family. As to quaternary structure, the basic unit is a heterodimer which dimerizes to form tetramers. The heterotetramers trimerize; 6 large subunits form a core ring with 6 small subunits projecting outwards. Adenosylcob(III)alamin is required as a cofactor.

It is found in the bacterial microcompartment. It catalyses the reaction ethanolamine = acetaldehyde + NH4(+). The protein operates within amine and polyamine degradation; ethanolamine degradation. Functionally, catalyzes the deamination of various vicinal amino-alcohols to oxo compounds. Allows this organism to utilize ethanolamine as the sole source of nitrogen and carbon in the presence of external vitamin B12. This chain is Ethanolamine ammonia-lyase small subunit, found in Azotobacter vinelandii (strain DJ / ATCC BAA-1303).